The chain runs to 705 residues: Variediene synthase (705 aa).

Positions 9–331 are terpene cyclase; sequence LNSTLSSVVE…RCPRYHPWLC (323 aa). Mg(2+) is bound at residue Asp100. Residues Asp100, 186 to 189, Asn230, 234 to 238, and 325 to 326 each bind substrate; these read RIID, SFDIE, and RY. The DDXXD 1 signature appears at 100–104; that stretch reads DNVVE. Residues 230-238 carry the NSE/DTE motif; it reads NDYFSFDIE. Positions 332–705 are prenyltransferase; that stretch reads KEAASLLHQD…VRLLIHRLKV (374 aa). The span at 349 to 366 shows a compositional bias: basic and acidic residues; it reads GRKPQALEEYRSRSHSES. A disordered region spans residues 349–374; the sequence is GRKPQALEEYRSRSHSESDLSDASPT. Positions 424, 427, and 456 each coordinate isopentenyl diphosphate. Mg(2+) contacts are provided by Asp463 and Asp467. A DDXXD 2 motif is present at residues 463–467; the sequence is DDIED. Arg472 lines the dimethylallyl diphosphate pocket. Arg473 serves as a coordination point for isopentenyl diphosphate. Residues Lys550, Thr551, Gln589, Asn596, Lys605, and Lys615 each coordinate dimethylallyl diphosphate.

It in the N-terminal section; belongs to the terpene synthase family. This sequence in the C-terminal section; belongs to the FPP/GGPP synthase family. Hexamer. It depends on Mg(2+) as a cofactor.

It carries out the reaction isopentenyl diphosphate + (2E,6E)-farnesyl diphosphate = (2E,6E,10E)-geranylgeranyl diphosphate + diphosphate. The enzyme catalyses isopentenyl diphosphate + (2E,6E,10E)-geranylgeranyl diphosphate = (2E,6E,10E,14E)-geranylfarnesyl diphosphate + diphosphate. The catalysed reaction is (2E,6E,10E)-geranylgeranyl diphosphate = variediene + diphosphate. It catalyses the reaction (2E,6E,10E,14E)-geranylfarnesyl diphosphate = (R,2E)-alpha-cericerene + diphosphate. Its pathway is secondary metabolite biosynthesis; terpenoid biosynthesis. Functionally, bifunctional terpene synthase that converts dimethylallyl diphosphate (DMAPP) and isopentenyl diphosphate (IPP) into variediene as a single product. The C-terminal prenyltransferase (PT) domain of EvVS catalyzes formation of geranylgeranyl pyrophosphate (GGPP), whereas the N-terminal terpene cyclase (TC) domain catalyzes the cyclization of GGPP to variediene. The PT domain can also synthesize geranylfarnesyl pyrophosphate (GFPP) from the C5 isoprene units in vitro, while the TC domain is able to cyclize GFPP to the sesterterpene (2E)-alpha-cericerene. The chain is Variediene synthase from Emericella variicolor (Aspergillus stellatus).